Reading from the N-terminus, the 406-residue chain is Tryptophan synthase beta chain (406 aa).

Residue lysine 99 is modified to N6-(pyridoxal phosphate)lysine.

It belongs to the TrpB family. In terms of assembly, tetramer of two alpha and two beta chains. Requires pyridoxal 5'-phosphate as cofactor.

It carries out the reaction (1S,2R)-1-C-(indol-3-yl)glycerol 3-phosphate + L-serine = D-glyceraldehyde 3-phosphate + L-tryptophan + H2O. It participates in amino-acid biosynthesis; L-tryptophan biosynthesis; L-tryptophan from chorismate: step 5/5. In terms of biological role, the beta subunit is responsible for the synthesis of L-tryptophan from indole and L-serine. This Brucella anthropi (strain ATCC 49188 / DSM 6882 / CCUG 24695 / JCM 21032 / LMG 3331 / NBRC 15819 / NCTC 12168 / Alc 37) (Ochrobactrum anthropi) protein is Tryptophan synthase beta chain.